Here is a 609-residue protein sequence, read N- to C-terminus: Leukotriene A-4 hydrolase (609 aa).

A peptide contacts are provided by residues 131–133 (QCQ) and 263–268 (PYGGME). Residue His292 coordinates Zn(2+). Residue Glu293 is the Proton acceptor of the active site. 2 residues coordinate Zn(2+): His296 and Glu315. Catalysis depends on Tyr380, which acts as the Proton donor. Residue 560 to 562 (RMK) coordinates a peptide.

The protein belongs to the peptidase M1 family. Homodimer. The cofactor is Zn(2+). As to expression, expressed in oocytes.

Its subcellular location is the cytoplasm. It carries out the reaction Release of the N-terminal residue from a tripeptide.. The enzyme catalyses leukotriene A4 + H2O = leukotriene B4. It participates in lipid metabolism; leukotriene B4 biosynthesis. Its activity is regulated as follows. The epoxide hydrolase activity is mildly restrained by suicide inactivation, possibly involving binding of LTA4 to Tyr-380. Its function is as follows. Bifunctional zinc metalloenzyme that comprises both epoxide hydrolase (EH) and aminopeptidase activities. Acts as an epoxide hydrolase to catalyze the conversion of leukotriene A4 (LTA4) to the pro-inflammatory mediator leukotriene B4 (LTB4). During the conversion of LTA4 to LTB4, a second product is formed, the isomeric delta6-trans-delta8-cis-LTB4 (5S,12R-dihydroxy-6,10-trans-8,14-cis-eicosatetraenoic acid), with a relative formation of 10% delta6-trans-delta8-cis-LTB4 compared to 90% LTB4. The production of delta6-trans-delta8-cis-LTB4 seems to depend on the phenylalanine residue at position 375. Also has aminopeptidase activity. This chain is Leukotriene A-4 hydrolase, found in Xenopus laevis (African clawed frog).